Reading from the N-terminus, the 62-residue chain is Prokaryotic ubiquitin-like protein Pup 2 (62 aa).

Positions 1-34 (MRQEKPKRHGREDDEPPEPAPAGRARDTTVGDDT) are disordered. An ARC ATPase binding region spans residues 21-56 (PAGRARDTTVGDDTDELLDEIDGVLEENAVEFVRSY). Glutamate 62 participates in a covalent cross-link: Isoglutamyl lysine isopeptide (Glu-Lys) (interchain with K-? in acceptor proteins).

This sequence belongs to the prokaryotic ubiquitin-like protein family. As to quaternary structure, strongly interacts with the proteasome-associated ATPase ARC through a hydrophobic interface; the interacting region of Pup lies in its C-terminal half. There is one Pup binding site per ARC hexamer ring.

The protein operates within protein degradation; proteasomal Pup-dependent pathway. Protein modifier that is covalently attached to lysine residues of substrate proteins, thereby targeting them for proteasomal degradation. The tagging system is termed pupylation. In Saccharopolyspora erythraea (strain ATCC 11635 / DSM 40517 / JCM 4748 / NBRC 13426 / NCIMB 8594 / NRRL 2338), this protein is Prokaryotic ubiquitin-like protein Pup 2.